Here is an 825-residue protein sequence, read N- to C-terminus: Beta-glucosidase (825 aa).

The signal sequence occupies residues 1–20; it reads MLLPLYGLASFLVLSQAALV. N-linked (GlcNAc...) asparagine glycosylation is found at Asn21, Asn74, Asn97, Asn230, and Asn271. Residue Asp299 is part of the active site. N-linked (GlcNAc...) asparagine glycans are attached at residues Asn328, Asn335, Asn537, Asn550, Asn556, Asn578, Asn667, Asn690, Asn718, Asn733, and Asn761.

The protein belongs to the glycosyl hydrolase 3 family. In terms of assembly, homotetramer.

It catalyses the reaction Hydrolysis of terminal, non-reducing beta-D-glucosyl residues with release of beta-D-glucose.. The protein operates within glycan metabolism; cellulose degradation. This is Beta-glucosidase from Wickerhamomyces anomalus (Yeast).